The following is a 242-amino-acid chain: DNA repair protein RecO (242 aa).

This sequence belongs to the RecO family. In terms of assembly, monomer.

In terms of biological role, involved in DNA repair and RecF pathway recombination. The protein is DNA repair protein RecO of Shigella boydii serotype 18 (strain CDC 3083-94 / BS512).